We begin with the raw amino-acid sequence, 357 residues long: Peptide chain release factor 1 (357 aa).

Q236 carries the post-translational modification N5-methylglutamine.

It belongs to the prokaryotic/mitochondrial release factor family. In terms of processing, methylated by PrmC. Methylation increases the termination efficiency of RF1.

The protein localises to the cytoplasm. In terms of biological role, peptide chain release factor 1 directs the termination of translation in response to the peptide chain termination codons UAG and UAA. The protein is Peptide chain release factor 1 (prfA) of Mycobacterium bovis (strain ATCC BAA-935 / AF2122/97).